The following is a 262-amino-acid chain: Glutamate racemase (262 aa).

Residues 10–11 (DS) and 42–43 (FG) each bind substrate. C74 serves as the catalytic Proton donor/acceptor. 75 to 76 (NT) serves as a coordination point for substrate. C189 (proton donor/acceptor) is an active-site residue. Residue 190–191 (TH) participates in substrate binding.

It belongs to the aspartate/glutamate racemases family.

It carries out the reaction L-glutamate = D-glutamate. It functions in the pathway cell wall biogenesis; peptidoglycan biosynthesis. Provides the (R)-glutamate required for cell wall biosynthesis. The sequence is that of Glutamate racemase from Mesorhizobium japonicum (strain LMG 29417 / CECT 9101 / MAFF 303099) (Mesorhizobium loti (strain MAFF 303099)).